The sequence spans 189 residues: MEYKRPIGLDIDLETGVIPGAKKLVRRLSDLKGYFLDEEAYNELLKEDPVVYEVYAIEQEEKEGDLNFATTVLYPGKVGKEFFFTKGHFHAKPDRAEIYYGIKGKGGMLLQTPEGEAEWIPMGPGTVVYVPPYWAHRTVNTGNEPFIFLAIYPADAGHDYGSIKEKGFSKIVIEEDGEVKVVDNPRWKE.

Positions 88, 90, 97, and 136 each coordinate Fe cation.

The protein belongs to the archaeal-type GPI family. In terms of assembly, homodimer.

It is found in the cytoplasm. It carries out the reaction alpha-D-glucose 6-phosphate = beta-D-fructose 6-phosphate. The protein operates within carbohydrate degradation; glycolysis; D-glyceraldehyde 3-phosphate and glycerone phosphate from D-glucose: step 2/4. This Thermococcus kodakarensis (strain ATCC BAA-918 / JCM 12380 / KOD1) (Pyrococcus kodakaraensis (strain KOD1)) protein is Glucose-6-phosphate isomerase.